Here is a 1241-residue protein sequence, read N- to C-terminus: ATP-dependent helicase/nuclease subunit A (1241 aa).

Residues 12-485 (SQWTDDQWKA…IDLAKNFRSR (474 aa)) enclose the UvrD-like helicase ATP-binding domain. Residue 33-40 (AAAGSGKT) coordinates ATP. The UvrD-like helicase C-terminal domain occupies 505 to 805 (GEIDYDADAE…RIMTIHKSKG (301 aa)).

The protein belongs to the helicase family. AddA subfamily. In terms of assembly, heterodimer of AddA and AddB/RexB. Mg(2+) serves as cofactor.

It carries out the reaction Couples ATP hydrolysis with the unwinding of duplex DNA by translocating in the 3'-5' direction.. The catalysed reaction is ATP + H2O = ADP + phosphate + H(+). In terms of biological role, the heterodimer acts as both an ATP-dependent DNA helicase and an ATP-dependent, dual-direction single-stranded exonuclease. Recognizes the chi site generating a DNA molecule suitable for the initiation of homologous recombination. The AddA nuclease domain is required for chi fragment generation; this subunit has the helicase and 3' -&gt; 5' nuclease activities. The polypeptide is ATP-dependent helicase/nuclease subunit A (Bacillus cereus (strain ATCC 10987 / NRS 248)).